A 131-amino-acid polypeptide reads, in one-letter code: Profilin-1 (131 aa).

It belongs to the profilin family. Occurs in many kinds of cells as a complex with monomeric actin in a 1:1 ratio.

It localises to the cytoplasm. It is found in the cytoskeleton. Its function is as follows. Binds to actin and affects the structure of the cytoskeleton. At high concentrations, profilin prevents the polymerization of actin, whereas it enhances it at low concentrations. By binding to PIP2, it inhibits the formation of IP3 and DG. This is Profilin-1 from Ambrosia artemisiifolia (Common ragweed).